We begin with the raw amino-acid sequence, 262 residues long: Cyclin-dependent kinase inhibitor 1 (262 aa).

The interval 140–212 (SDVAEAGSEH…SAQQATRPKI (73 aa)) is disordered. Residues 160–169 (SGRDRERRET) are compositionally biased toward basic and acidic residues. Residues 198 to 208 (SAATASAQQAT) show a composition bias toward low complexity.

The protein belongs to the CDI family. ICK/KRP subfamily. Expressed in roots, stems, leaves and apex.

In terms of biological role, regulates the production of endosperm cells, affecting seed filling and embryo development. Regulates endoreduplication of endosperm cells. May play a role in the exit from the mitotic cell cycle during rice grain formation. Inhibitis leaf elongation rates by decreasing cell number, that is partly compensated by increased cell size. May not affect growth rate or cell size of the primary root. The chain is Cyclin-dependent kinase inhibitor 1 (KRP1) from Oryza sativa subsp. japonica (Rice).